A 193-amino-acid polypeptide reads, in one-letter code: 3-isopropylmalate dehydratase small subunit (193 aa).

The protein belongs to the LeuD family. LeuD type 1 subfamily. As to quaternary structure, heterodimer of LeuC and LeuD.

It catalyses the reaction (2R,3S)-3-isopropylmalate = (2S)-2-isopropylmalate. Its pathway is amino-acid biosynthesis; L-leucine biosynthesis; L-leucine from 3-methyl-2-oxobutanoate: step 2/4. Catalyzes the isomerization between 2-isopropylmalate and 3-isopropylmalate, via the formation of 2-isopropylmaleate. This is 3-isopropylmalate dehydratase small subunit from Bacillus cereus (strain B4264).